The sequence spans 868 residues: Protein translocase subunit SecA (868 aa).

ATP-binding positions include Gln-88, 106–110, and Asp-509; that span reads GEGKT. Over residues 816-827 the composition is skewed to polar residues; sequence NAENEPLNYNNQ. The tract at residues 816-868 is disordered; the sequence is NAENEPLNYNNQGEDENFTPEKKIPRNAPCPCGSGKKYKDCHGKSGPKKGIFA. Zn(2+)-binding residues include Cys-845, Cys-847, Cys-856, and His-857.

This sequence belongs to the SecA family. As to quaternary structure, monomer and homodimer. Part of the essential Sec protein translocation apparatus which comprises SecA, SecYEG and auxiliary proteins SecDF-YajC and YidC. Zn(2+) is required as a cofactor.

The protein resides in the cell inner membrane. Its subcellular location is the cytoplasm. It carries out the reaction ATP + H2O + cellular proteinSide 1 = ADP + phosphate + cellular proteinSide 2.. Part of the Sec protein translocase complex. Interacts with the SecYEG preprotein conducting channel. Has a central role in coupling the hydrolysis of ATP to the transfer of proteins into and across the cell membrane, serving as an ATP-driven molecular motor driving the stepwise translocation of polypeptide chains across the membrane. The chain is Protein translocase subunit SecA from Campylobacter concisus (strain 13826).